The chain runs to 203 residues: 2-phospho-L-lactate guanylyltransferase (203 aa).

It belongs to the CofC family. In terms of assembly, homodimer.

It catalyses the reaction (2S)-2-phospholactate + GTP + H(+) = (2S)-lactyl-2-diphospho-5'-guanosine + diphosphate. It participates in cofactor biosynthesis; coenzyme F420 biosynthesis. In terms of biological role, guanylyltransferase that catalyzes the activation of (2S)-2-phospholactate (2-PL) as (2S)-lactyl-2-diphospho-5'-guanosine, via the condensation of 2-PL with GTP. It is involved in the biosynthesis of coenzyme F420, a hydride carrier cofactor. This chain is 2-phospho-L-lactate guanylyltransferase, found in Halomicrobium mukohataei (strain ATCC 700874 / DSM 12286 / JCM 9738 / NCIMB 13541) (Haloarcula mukohataei).